A 102-amino-acid polypeptide reads, in one-letter code: ATP-dependent Clp protease adapter protein ClpS (102 aa).

It belongs to the ClpS family. As to quaternary structure, binds to the N-terminal domain of the chaperone ClpA.

Functionally, involved in the modulation of the specificity of the ClpAP-mediated ATP-dependent protein degradation. The chain is ATP-dependent Clp protease adapter protein ClpS from Shewanella putrefaciens (strain CN-32 / ATCC BAA-453).